Here is a 132-residue protein sequence, read N- to C-terminus: Small ribosomal subunit protein uS8 (132 aa).

This sequence belongs to the universal ribosomal protein uS8 family. Part of the 30S ribosomal subunit. Contacts proteins S5 and S12.

One of the primary rRNA binding proteins, it binds directly to 16S rRNA central domain where it helps coordinate assembly of the platform of the 30S subunit. The protein is Small ribosomal subunit protein uS8 of Nitrobacter hamburgensis (strain DSM 10229 / NCIMB 13809 / X14).